A 132-amino-acid polypeptide reads, in one-letter code: L-ectoine synthase (132 aa).

This sequence belongs to the ectoine synthase family.

It carries out the reaction (2S)-4-acetamido-2-aminobutanoate = L-ectoine + H2O. The protein operates within amine and polyamine biosynthesis; ectoine biosynthesis; L-ectoine from L-aspartate 4-semialdehyde: step 3/3. Its function is as follows. Catalyzes the circularization of gamma-N-acetyl-alpha,gamma-diaminobutyric acid (ADABA) to ectoine (1,4,5,6-tetrahydro-2-methyl-4-pyrimidine carboxylic acid), which is an excellent osmoprotectant. This is L-ectoine synthase from Rhodococcus jostii (strain RHA1).